The primary structure comprises 124 residues: Ribonuclease pancreatic (124 aa).

Positions 7 and 10 each coordinate substrate. H12 acts as the Proton acceptor in catalysis. Disulfide bonds link C26–C84, C40–C95, C58–C110, and C65–C72. N34 is a glycosylation site (N-linked (GlcNAc...) asparagine). Substrate-binding positions include 41–45, K66, and R85; that span reads KPVNT. H119 (proton donor) is an active-site residue.

It belongs to the pancreatic ribonuclease family. In terms of assembly, monomer. Interacts with and forms tight 1:1 complexes with RNH1. Dimerization of two such complexes may occur. Interaction with RNH1 inhibits this protein. As to expression, pancreas.

Its subcellular location is the secreted. It catalyses the reaction an [RNA] containing cytidine + H2O = an [RNA]-3'-cytidine-3'-phosphate + a 5'-hydroxy-ribonucleotide-3'-[RNA].. The enzyme catalyses an [RNA] containing uridine + H2O = an [RNA]-3'-uridine-3'-phosphate + a 5'-hydroxy-ribonucleotide-3'-[RNA].. Functionally, endonuclease that catalyzes the cleavage of RNA on the 3' side of pyrimidine nucleotides. Acts on single-stranded and double-stranded RNA. In Eudorcas thomsonii (Thomson's gazelle), this protein is Ribonuclease pancreatic (RNASE1).